Consider the following 126-residue polypeptide: Profilin (126 aa).

It belongs to the profilin family. In terms of assembly, occurs in many kinds of cells as a complex with monomeric actin in a 1:1 ratio.

It localises to the cytoplasm. The protein resides in the cytoskeleton. Functionally, binds to actin and affects the structure of the cytoskeleton. At high concentrations, profilin prevents the polymerization of actin, whereas it enhances it at low concentrations. By binding to PIP2, it inhibits the formation of IP3 and DG. The chain is Profilin from Bombyx mori (Silk moth).